A 297-amino-acid chain; its full sequence is ClpXP adapter protein SpxH (297 aa).

It belongs to the SpxH family. Interacts with Spx.

The protein resides in the cytoplasm. Adapter protein required for efficient degradation of Spx by ClpXP under non-stress conditions. Interaction with Spx stabilizes Spx and exposes the C-terminus of Spx for recognition and proteolysis by ClpXP. The chain is ClpXP adapter protein SpxH from Bacillus cereus (strain ATCC 14579 / DSM 31 / CCUG 7414 / JCM 2152 / NBRC 15305 / NCIMB 9373 / NCTC 2599 / NRRL B-3711).